Reading from the N-terminus, the 671-residue chain is Condensin complex subunit 2 (671 aa).

Residues 1-24 (MDESLTPNPKQKPASTTTRIQAPT) show a composition bias toward polar residues. Disordered regions lie at residues 1–33 (MDESLTPNPKQKPASTTTRIQAPTSPFFLGSND), 404–444 (NSWA…KQAE), and 510–564 (RRKN…ISQP). The Kleisin-gamma middle domain (GM domain) involved in chromosome-binding motif lies at 406–415 (WAGPDHWKYR). A compositionally biased stretch (acidic residues) spans 536–556 (VYDDDDGPFDDNENDQSDAED).

Belongs to the CND2 (condensin subunit 2) family. In terms of assembly, component of the condensin complex. Mostly expressed in flower buds and flowers, and, to a lower extent, in roots, stems, leaves and seedlings.

The protein localises to the cytoplasm. It localises to the chromosome. Its function is as follows. Regulatory subunit of the condensin complex, a complex required for conversion of interphase chromatin into mitotic-like condense chromosomes. The condensin complex probably introduces positive supercoils into relaxed DNA in the presence of type I topoisomerases and converts nicked DNA into positive knotted forms in the presence of type II topoisomerases. Essential protein. This Arabidopsis thaliana (Mouse-ear cress) protein is Condensin complex subunit 2 (CAPH).